The primary structure comprises 164 residues: Photosystem II extrinsic protein V (164 aa).

The signal sequence occupies residues 1 to 27 (MNRISIYRIKVLAFLFAVSTYVYPASS). Positions 64, 67, 68, and 119 each coordinate heme c.

The protein belongs to the cytochrome c family. PsbV subfamily. PSII is composed of 1 copy each of membrane proteins PsbA, PsbB, PsbC, PsbD, PsbE, PsbF, PsbH, PsbI, PsbJ, PsbK, PsbL, PsbM, PsbT, PsbY, PsbZ, Psb30/Ycf12, at least 3 peripheral proteins of the oxygen-evolving complex and a large number of cofactors. It forms dimeric complexes. The extrinsic subunits in red algae are PsbO (OEC33), PsbQ', cytochrome c-550 and PsbU. It depends on heme c as a cofactor.

It localises to the plastid. Its subcellular location is the chloroplast thylakoid membrane. In terms of biological role, one of the extrinsic, lumenal subunits of photosystem II (PSII). PSII is a light-driven water plastoquinone oxidoreductase, using light energy to abstract electrons from H(2)O, generating a proton gradient subsequently used for ATP formation. The extrinsic proteins stabilize the structure of photosystem II oxygen-evolving complex (OEC), the ion environment of oxygen evolution and protect the OEC against heat-induced inactivation. This chain is Photosystem II extrinsic protein V, found in Cyanidium caldarium (Red alga).